The sequence spans 886 residues: DNA mismatch repair protein MutS (886 aa).

Position 641–648 (641–648) interacts with ATP; sequence GPNMAGKS.

Belongs to the DNA mismatch repair MutS family.

In terms of biological role, this protein is involved in the repair of mismatches in DNA. It is possible that it carries out the mismatch recognition step. This protein has a weak ATPase activity. The protein is DNA mismatch repair protein MutS of Rickettsia felis (strain ATCC VR-1525 / URRWXCal2) (Rickettsia azadi).